We begin with the raw amino-acid sequence, 583 residues long: Sphingomyelin phosphodiesterase A (583 aa).

Positions 1-21 (MKSIPIILLVLIGLLLASVYS) are cleaved as a signal peptide. The Saposin B-type domain maps to 51–133 (IQLSCDVCQI…GYFKICSATG (83 aa)). 3 disulfides stabilise this stretch: Cys55–Cys129, Cys58–Cys123, and Cys86–Cys97. The N-linked (GlcNAc...) asparagine glycan is linked to Asn72. A glycan (N-linked (GlcNAc...) asparagine) is linked at Asn182. Positions 193 and 195 each coordinate Zn(2+). An intrachain disulfide couples Cys214 to Cys229. Residues Asp258 and Asn298 each contribute to the Zn(2+) site. The N-linked (GlcNAc...) asparagine glycan is linked to Asn377. Positions 401, 436, and 438 each coordinate Zn(2+). Asn495, Asn500, Asn537, and Asn547 each carry an N-linked (GlcNAc...) asparagine glycan. A disulfide bridge links Cys567 with Cys580.

The protein belongs to the acid sphingomyelinase family. Zn(2+) serves as cofactor.

Its subcellular location is the secreted. Functionally, converts sphingomyelin to ceramide. The protein is Sphingomyelin phosphodiesterase A (sgmA) of Dictyostelium discoideum (Social amoeba).